An 867-amino-acid chain; its full sequence is MKFSHSLQFNAVPEWSESYIAYSNLKKLIYSLEHEQITLQQGAPDEETRLLEHERRSPDDRFMFALDKELQGIVEFYAPKEKEIADQYGRIKGEFETYENEYMSQGNNINYPTPERLQKSSASRKSGRMARSQELPRITSSNREIYLNGQTSDGGYAAPAISRAESTAIQPSEPHDVDTSKNGLSKKQHSEAQPEVQGNDDEVEEEDDDDDDEDEDEDEDEDNNNNNRWLLIEQYPSDIVAYENFVSLKRKLTQLYVSIHDLISYVHLNYTGFSKILKKYDKTLGSSLRESYMKRVNQAYPFLPATGKTLSKRLNIVAEWYAKLCCQGDTFVAIRRLRGHLREYVAWERNTIWREMMAMERRTQAARLSGLKPVAADEKESEQPPYFTIKTKFGVFRIPRCFFNSTIATLITIIVIFILLLSFPVIDNREQNNCLALLVMVSLLWATEAIPLFVTSFLVPFMTVFLKILRDENGSPLSGKESTKVIFSSMWNPTIVLLLGGFTIAAALSKYHIAKRLATSILAHAGRKPRSVLLTNMFVAMFASMWISNVAAPVLCFSIIQPLLRNLPAESDFAKILIVGIALASNVGGIASPISSPQNIVALQNMDPAAGWGEWFAVSIPVSLLCIFSIWFLLSFGLLKDEHITLAKIRSTKDTFTGVQWFISIVTIGTIVLWCLERRFDEVFGDMGVIALVPIIVFFGTGLLTKEDFNNFLWTVIVLAMGGVALGKVVSSSGLLELIALKIGNAVSSLNTFRVLLIFSALTLVVSSFISHIVAAMVVLPIVHEVGSRLADPHPRLFVLASGMMCSLAMALPTSGFPNMTAIMMENEAGKRYLKVSDFLKAGIPATLISFVILLLIGTPIMRALGF.

Residues 1–294 (MKFSHSLQFN…GSSLRESYMK (294 aa)) enclose the SPX domain. 2 disordered regions span residues 105 to 152 (QGNN…GQTS) and 165 to 228 (ESTA…NNNR). The span at 138 to 152 (ITSSNREIYLNGQTS) shows a compositional bias: polar residues. Residues 198–223 (GNDDEVEEEDDDDDDEDEDEDEDEDN) show a composition bias toward acidic residues. 12 helical membrane passes run 406-426 (TIAT…FPVI), 434-454 (CLAL…PLFV), 485-505 (VIFS…FTIA), 537-557 (MFVA…VLCF), 576-596 (ILIV…PISS), 616-636 (FAVS…LLSF), 656-676 (FTGV…LWCL), 683-703 (VFGD…GTGL), 712-732 (FLWT…VVSS), 755-775 (VLLI…HIVA), 797-817 (LFVL…TSGF), and 842-862 (AGIP…TPIM).

Belongs to the CitM (TC 2.A.11) transporter family.

It is found in the endoplasmic reticulum membrane. This is an uncharacterized protein from Schizosaccharomyces pombe (strain 972 / ATCC 24843) (Fission yeast).